The primary structure comprises 397 residues: Tryptophan synthase beta chain 1 (397 aa).

Lys-94 is modified (N6-(pyridoxal phosphate)lysine).

It belongs to the TrpB family. In terms of assembly, tetramer of two alpha and two beta chains. Pyridoxal 5'-phosphate is required as a cofactor.

The enzyme catalyses (1S,2R)-1-C-(indol-3-yl)glycerol 3-phosphate + L-serine = D-glyceraldehyde 3-phosphate + L-tryptophan + H2O. It participates in amino-acid biosynthesis; L-tryptophan biosynthesis; L-tryptophan from chorismate: step 5/5. Its function is as follows. The beta subunit is responsible for the synthesis of L-tryptophan from indole and L-serine. The chain is Tryptophan synthase beta chain 1 (trpB1) from Archaeoglobus fulgidus (strain ATCC 49558 / DSM 4304 / JCM 9628 / NBRC 100126 / VC-16).